The sequence spans 506 residues: MKRTPTAEEREREAKKLRLLEELEDTWLPYLTPKDDEFYQQWQLKYPKLILREAGSVPEDLHKEVQEAFLTLHKHGCFFRDLVRIQGKDLLTPVSRILIGNPGCTYKYLNTRLFTVPWPVKGASTKYDEAGIAAACQTFLKLNDYLQIETIQALEELACKEKSNIDAVPVCIGPDFPRVGMGSFDGQDELDIKNRAAYNVTLLNFMDPQKMPYLKEEPYFGMGKMAVSWHHDENLVERSAVAVYSYSCEGPEEESEDDPQLEGRDPDTWHVGFKISWDIETPGLAIPLHQGDCYFMLDDLNATHQHCVLAGLPPRFSSTHRVAECSTGTLDYILQRCQLALQNVRDEADNGDVSLKSFEPVVLKQGEEIHNEVEFEWLRQYWFQGNRYRKCTDWWCQPMTQLEGLWKKMEGVTNAVLHEVRREGVPVEQRNEILTAILALLTTRQNLRREWHARCQSRIARTLPVDQKPECRPYWEKDDPSMPLPFDLTDIVSELRGEFGTLPWSA.

T4 is subject to Phosphothreonine. Positions 32 to 326 (TPKDDEFYQQ…SSTHRVAECS (295 aa)) are fe2OG dioxygenase domain. Substrate contacts are provided by R96 and Y108. N204 is a binding site for 2-oxoglutarate. Positions 212 to 223 (PYLKEEPYFGMG) are loop L1; predicted to block binding of double-stranded DNA or RNA. K215 is modified (N6-acetyllysine). The Fe cation site is built by H230 and D232. 230–233 (HHDE) lines the substrate pocket. Y294 contributes to the 2-oxoglutarate binding site. H306 is a binding site for Fe cation. 2-oxoglutarate-binding positions include 315–317 (RFS), T319, and R321.

This sequence belongs to the fto family. As to quaternary structure, monomer. May also exist as homodimer. Requires Fe(2+) as cofactor.

It is found in the nucleus. The protein localises to the nucleus speckle. The protein resides in the cytoplasm. It catalyses the reaction a 5'-end (N(7)-methyl 5'-triphosphoguanosine)-(N(6),2'-O-dimethyladenosine) in mRNA + 2-oxoglutarate + O2 = a 5'-end (N(7)-methyl 5'-triphosphoguanosine)-(2'-O-methyladenosine) in mRNA + formaldehyde + succinate + CO2. It carries out the reaction an N(6)-methyladenosine in mRNA + 2-oxoglutarate + O2 = an adenosine in mRNA + formaldehyde + succinate + CO2. The enzyme catalyses N(6)-methyladenosine in U6 snRNA + 2-oxoglutarate + O2 = adenosine in U6 snRNA + formaldehyde + succinate + CO2. The catalysed reaction is a 5'-end (N(7)-methyl 5'-triphosphoguanosine)-(N(6),2'-O-dimethyladenosine) in U6 snRNA + 2-oxoglutarate + O2 = a 5'-end (N(7)-methyl 5'-triphosphoguanosine)-(2'-O-methyladenosine) in U6 snRNA + formaldehyde + succinate + CO2. It catalyses the reaction an N(1)-methyladenosine in tRNA + 2-oxoglutarate + O2 = an adenosine in tRNA + formaldehyde + succinate + CO2. In terms of biological role, RNA demethylase that mediates oxidative demethylation of different RNA species, such as mRNAs, tRNAs and snRNAs, and acts as a regulator of fat mass, adipogenesis and energy homeostasis. Specifically demethylates N(6)-methyladenosine (m6A) RNA, the most prevalent internal modification of messenger RNA (mRNA) in higher eukaryotes. M6A demethylation by FTO affects mRNA expression and stability. Also able to demethylate m6A in U6 small nuclear RNA (snRNA). Mediates demethylation of N(6),2'-O-dimethyladenosine cap (m6A(m)), by demethylating the N(6)-methyladenosine at the second transcribed position of mRNAs and U6 snRNA. Demethylation of m6A(m) in the 5'-cap by FTO affects mRNA stability by promoting susceptibility to decapping. Also acts as a tRNA demethylase by removing N(1)-methyladenine from various tRNAs. Has no activity towards 1-methylguanine. Has no detectable activity towards double-stranded DNA. Also able to repair alkylated DNA and RNA by oxidative demethylation: demethylates single-stranded RNA containing 3-methyluracil, single-stranded DNA containing 3-methylthymine and has low demethylase activity towards single-stranded DNA containing 1-methyladenine or 3-methylcytosine. Ability to repair alkylated DNA and RNA is however unsure in vivo. Involved in the regulation of fat mass, adipogenesis and body weight, thereby contributing to the regulation of body size and body fat accumulation. Involved in the regulation of thermogenesis and the control of adipocyte differentiation into brown or white fat cells. Regulates activity of the dopaminergic midbrain circuitry via its ability to demethylate m6A in mRNAs. Plays an oncogenic role in a number of acute myeloid leukemias by enhancing leukemic oncogene-mediated cell transformation: acts by mediating m6A demethylation of target transcripts such as MYC, CEBPA, ASB2 and RARA, leading to promote their expression. This chain is Alpha-ketoglutarate-dependent dioxygenase FTO (FTO), found in Canis lupus familiaris (Dog).